Here is a 312-residue protein sequence, read N- to C-terminus: Small kinetochore-associated protein (312 aa).

Positions 1–171 (MAAPEAEAQE…PFNKQKPEEE (171 aa)) are disordered. Positions 131-143 (DVTKVTKSRRENG) are enriched in basic and acidic residues. The segment at 156-312 (LRNSYKPFNK…LEEMEQLLEM (157 aa)) is interaction with SPAG5. Coiled coils occupy residues 166 to 210 (QKPE…LEKF) and 246 to 287 (LLET…QFLE).

As to quaternary structure, part of an astrin (SPAG5)-kinastrin (SKAP) complex containing KNSTRN, SPAG5, PLK1, DYNLL1 and SGO2A. Interacts with SPAG5. Directly binds to microtubules, although at relatively low affinity. Interacts with CENPE; this interaction greatly favors microtubule-binding. Interacts with DSN1/MIS13; leading to localization to kinetochores. Interacts with MAPRE1/EB1; leading to localization to the microtubule plus ends. Interacts with PRPF19. Interacts with DYNLL1. Interacts with MAP4.

It is found in the nucleus. The protein localises to the chromosome. Its subcellular location is the centromere. It localises to the kinetochore. The protein resides in the cytoplasm. It is found in the cytoskeleton. The protein localises to the spindle pole. Its subcellular location is the microtubule organizing center. Its function is as follows. Essential component of the mitotic spindle required for faithful chromosome segregation and progression into anaphase. Promotes the metaphase-to-anaphase transition and is required for chromosome alignment, normal timing of sister chromatid segregation, and maintenance of spindle pole architecture. The astrin (SPAG5)-kinastrin (SKAP) complex promotes stable microtubule-kinetochore attachments. Required for kinetochore oscillations and dynamics of microtubule plus-ends during live cell mitosis, possibly by forming a link between spindle microtubule plus-ends and mitotic chromosomes to achieve faithful cell division. This is Small kinetochore-associated protein (Knstrn) from Mus musculus (Mouse).